Consider the following 124-residue polypeptide: uncharacterized protein (124 aa).

2 disordered regions span residues 1 to 26 and 100 to 124; these read MRRQEALVVTAGTASEASRDGEQPRP and IPGQQSRNCSLPQTKYYSRHGGLRR. Positions 102–115 are enriched in polar residues; sequence GQQSRNCSLPQTKY.

The protein localises to the cytoplasm. It is found in the cytoskeleton. The protein resides in the cilium basal body. This is an uncharacterized protein from Rattus norvegicus (Rat).